A 127-amino-acid chain; its full sequence is SH2 domain-containing protein 1A (127 aa).

The SH2 domain maps to 6 to 102 (VYHGKISRET…GIVIPLQYPV (97 aa)). The segment at 67–92 (ETAPGVHKRYFRKIKNLISAFQKPDQ) is interaction with FYN SH3 domain. An N6-acetyllysine modification is found at Lys-89. Residues 104–127 (KSSPRSTQGTTGIREDPDVCLKAP) form a disordered region. Residues 116–127 (IREDPDVCLKAP) are compositionally biased toward basic and acidic residues.

Interacts with CD84, CD244, LY9, SLAMF1 and FYN. Interacts with NTRK1, NTRK2 and NTRK3.

The protein resides in the cytoplasm. Its function is as follows. Cytoplasmic adapter regulating receptors of the signaling lymphocytic activation molecule (SLAM) family such as SLAMF1, CD244, LY9, CD84, SLAMF6 and SLAMF7. In SLAM signaling seems to cooperate with SH2D1B/EAT-2. Initially it has been proposed that association with SLAMF1 prevents SLAMF1 binding to inhibitory effectors including INPP5D/SHIP1 and PTPN11/SHP-2. However, by simultaneous interactions, recruits FYN which subsequently phosphorylates and activates SLAMF1. Positively regulates CD244/2B4- and CD84-mediated natural killer (NK) cell functions. Can also promote CD48-, SLAMF6 -, LY9-, and SLAMF7-mediated NK cell activation. In the context of NK cell-mediated cytotoxicity enhances conjugate formation with target cells. May also regulate the activity of the neurotrophin receptors NTRK1, NTRK2 and NTRK3. This Saguinus oedipus (Cotton-top tamarin) protein is SH2 domain-containing protein 1A (SH2D1A).